We begin with the raw amino-acid sequence, 260 residues long: MANEIVKEMIEAGVHFGHRTSLWNPKMAPYIFGKKNQIHILDIRETLRGLLRAKKYLSQVAAGGSLILFVGTKRQAGEAVEEQSLRCGMPFVSERWLGGTLTNFRTIRSRLGRLEELEALRAGDGINDYSKKMQSSLNREYRKMYRNLNGLRTMNRLPEVMFIVDPGKERNAVREAKRLGITTVALIDTDSDPSQIDLPIPGNDDGIRSVEMIMRELADAVIAGKGQTQTEAAPNAQAAPEAAAPAEQPAEEAAAASSEG.

A disordered region spans residues 225–260; it reads KGQTQTEAAPNAQAAPEAAAPAEQPAEEAAAASSEG. Low complexity predominate over residues 231–260; the sequence is EAAPNAQAAPEAAAPAEQPAEEAAAASSEG.

The protein belongs to the universal ribosomal protein uS2 family.

This is Small ribosomal subunit protein uS2 from Rhodopirellula baltica (strain DSM 10527 / NCIMB 13988 / SH1).